Here is a 499-residue protein sequence, read N- to C-terminus: Aspartyl/glutamyl-tRNA(Asn/Gln) amidotransferase subunit B (499 aa).

This sequence belongs to the GatB/GatE family. GatB subfamily. Heterotrimer of A, B and C subunits.

The catalysed reaction is L-glutamyl-tRNA(Gln) + L-glutamine + ATP + H2O = L-glutaminyl-tRNA(Gln) + L-glutamate + ADP + phosphate + H(+). It carries out the reaction L-aspartyl-tRNA(Asn) + L-glutamine + ATP + H2O = L-asparaginyl-tRNA(Asn) + L-glutamate + ADP + phosphate + 2 H(+). Functionally, allows the formation of correctly charged Asn-tRNA(Asn) or Gln-tRNA(Gln) through the transamidation of misacylated Asp-tRNA(Asn) or Glu-tRNA(Gln) in organisms which lack either or both of asparaginyl-tRNA or glutaminyl-tRNA synthetases. The reaction takes place in the presence of glutamine and ATP through an activated phospho-Asp-tRNA(Asn) or phospho-Glu-tRNA(Gln). This chain is Aspartyl/glutamyl-tRNA(Asn/Gln) amidotransferase subunit B, found in Mesorhizobium japonicum (strain LMG 29417 / CECT 9101 / MAFF 303099) (Mesorhizobium loti (strain MAFF 303099)).